The primary structure comprises 412 residues: Protein Mb3436c (412 aa).

Lysine 227 is modified (N6-(pyridoxal phosphate)lysine).

The protein belongs to the DegT/DnrJ/EryC1 family.

This Mycobacterium bovis (strain ATCC BAA-935 / AF2122/97) protein is Protein Mb3436c.